A 580-amino-acid polypeptide reads, in one-letter code: Protein O-linked-mannose beta-1,4-N-acetylglucosaminyltransferase 2 (580 aa).

Residues 1–4 (MHLS) are Cytoplasmic-facing. Residues 5 to 25 (AVFNALLVSVLAAVLWKHVRL) traverse the membrane as a helical; Signal-anchor for type II membrane protein segment. Topologically, residues 26-580 (REHAATLEEE…PFADVLVCST (555 aa)) are lumenal. Residues asparagine 99 and asparagine 276 are each glycosylated (N-linked (GlcNAc...) asparagine). The Fibronectin type-III domain maps to 488-580 (ARCQASVQGA…PFADVLVCST (93 aa)).

It belongs to the glycosyltransferase 61 family. Mainly expressed in the central nervous system.

It is found in the endoplasmic reticulum membrane. The enzyme catalyses 3-O-(alpha-D-mannosyl)-L-threonyl-[protein] + UDP-N-acetyl-alpha-D-glucosamine = 3-O-(N-acetyl-beta-D-glucosaminyl-(1-&gt;4)-alpha-D-mannosyl)-L-threonyl-[protein] + UDP + H(+). It participates in protein modification; protein glycosylation. Its function is as follows. O-linked mannose beta-1,4-N-acetylglucosaminyltransferase that transfers UDP-N-acetyl-D-glucosamine to the 4-position of the mannose to generate N-acetyl-D-glucosamine-beta-1,4-O-D-mannosylprotein. Involved in the biosynthesis of the phosphorylated O-mannosyl trisaccharide (N-acetylgalactosamine-beta-3-N-acetylglucosamine-beta-4-(phosphate-6-)mannose), a carbohydrate structure present in alpha-dystroglycan (DAG1), which is required for binding laminin G-like domain-containing extracellular proteins with high affinity. The protein is Protein O-linked-mannose beta-1,4-N-acetylglucosaminyltransferase 2 (Pomgnt2) of Mus musculus (Mouse).